The primary structure comprises 295 residues: Ribosomal protein L11 methyltransferase (295 aa).

S-adenosyl-L-methionine contacts are provided by Thr-145, Gly-166, Asp-188, and Asn-230.

Belongs to the methyltransferase superfamily. PrmA family.

Its subcellular location is the cytoplasm. The enzyme catalyses L-lysyl-[protein] + 3 S-adenosyl-L-methionine = N(6),N(6),N(6)-trimethyl-L-lysyl-[protein] + 3 S-adenosyl-L-homocysteine + 3 H(+). Functionally, methylates ribosomal protein L11. The protein is Ribosomal protein L11 methyltransferase of Pectobacterium carotovorum subsp. carotovorum (strain PC1).